The following is an 807-amino-acid chain: Spondin-1 (807 aa).

An N-terminal signal peptide occupies residues 1–28; that stretch reads MRLSPVLLRLSRGPALLALALPLAVALA. One can recognise a Reelin domain in the interval 29–194; that stretch reads FSDETLDKVP…DSTFDGVTDK (166 aa). 17 disulfide bridges follow: Cys-44–Cys-128, Cys-156–Cys-182, Cys-199–Cys-336, Cys-200–Cys-340, Cys-202–Cys-415, Cys-443–Cys-480, Cys-454–Cys-489, Cys-459–Cys-494, Cys-502–Cys-538, Cys-513–Cys-517, Cys-548–Cys-554, Cys-559–Cys-595, Cys-570–Cys-574, Cys-605–Cys-610, Cys-615–Cys-650, Cys-626–Cys-630, and Cys-660–Cys-665. In terms of domain architecture, Spondin spans 195 to 388; that stretch reads PILDCCACGT…LTSLDHPQSP (194 aa). The N-linked (GlcNAc...) asparagine glycan is linked to Asn-214. Residues Asp-325, Asp-354, and Asp-358 each contribute to the Ca(2+) site. 6 consecutive TSP type-1 domains span residues 442 to 495, 501 to 555, 558 to 611, 614 to 666, 668 to 721, and 754 to 806; these read TCIY…PGCS, TCTM…EECS, SCLT…PECH, PCLL…PECP, DCEL…RKCL, and GCRM…NVHP. N-linked (GlcNAc...) asparagine glycosylation is present at Asn-681.

As to quaternary structure, binds to the central extracellular domain of APP and inhibits beta-secretase cleavage of APP.

The protein resides in the secreted. The protein localises to the extracellular space. Its subcellular location is the extracellular matrix. Its function is as follows. Cell adhesion protein that promotes the attachment of spinal cord and sensory neuron cells and the outgrowth of neurites in vitro. May contribute to the growth and guidance of axons in both the spinal cord and the PNS. Major factor for vascular smooth muscle cell. This chain is Spondin-1 (SPON1), found in Bos taurus (Bovine).